Reading from the N-terminus, the 298-residue chain is ATP synthase gamma chain (298 aa).

It belongs to the ATPase gamma chain family. F-type ATPases have 2 components, CF(1) - the catalytic core - and CF(0) - the membrane proton channel. CF(1) has five subunits: alpha(3), beta(3), gamma(1), delta(1), epsilon(1). CF(0) has three main subunits: a, b and c.

It is found in the cell inner membrane. Functionally, produces ATP from ADP in the presence of a proton gradient across the membrane. The gamma chain is believed to be important in regulating ATPase activity and the flow of protons through the CF(0) complex. This Francisella tularensis subsp. tularensis (strain FSC 198) protein is ATP synthase gamma chain.